A 414-amino-acid polypeptide reads, in one-letter code: eIF5-mimic protein 1 (414 aa).

The tract at residues 1-22 (MNKNQKPVLTGQRFKTRKRDEK) is disordered. The W2 domain occupies 248–414 (VQQSLGTRKE…LQNAEEEFRI (167 aa)).

The protein belongs to the BZW family.

The protein localises to the cytoplasm. Functionally, translation initiation regulator which may repress non-AUG initiated translation and repeat-associated non-AUG (RAN) initiated translation by acting as a competitive inhibitor of eukaryotic translation initiation factor 5 (EIF5) function. The sequence is that of eIF5-mimic protein 1 (BZW2) from Gallus gallus (Chicken).